Here is a 787-residue protein sequence, read N- to C-terminus: Endonuclease MutS2 (787 aa).

329–336 contacts ATP; sequence GPNTGGKT. Residues 712–787 enclose the Smr domain; sequence INLLGCTVDE…DAGVTIVDFK (76 aa).

Belongs to the DNA mismatch repair MutS family. MutS2 subfamily. In terms of assembly, homodimer. Binds to stalled ribosomes, contacting rRNA.

Functionally, endonuclease that is involved in the suppression of homologous recombination and thus may have a key role in the control of bacterial genetic diversity. Its function is as follows. Acts as a ribosome collision sensor, splitting the ribosome into its 2 subunits. Detects stalled/collided 70S ribosomes which it binds and splits by an ATP-hydrolysis driven conformational change. Acts upstream of the ribosome quality control system (RQC), a ribosome-associated complex that mediates the extraction of incompletely synthesized nascent chains from stalled ribosomes and their subsequent degradation. Probably generates substrates for RQC. The polypeptide is Endonuclease MutS2 (Lachnospira eligens (strain ATCC 27750 / DSM 3376 / VPI C15-48 / C15-B4) (Eubacterium eligens)).